The sequence spans 165 residues: Large ribosomal subunit protein uL15 (165 aa).

A compositionally biased stretch (basic residues) spans 1-29 (MTSKKKRQRGSRTHGGGSHKNRRGAGHRG). Disordered stretches follow at residues 1 to 59 (MTSK…QKVQ) and 133 to 165 (KVEG…ADEE). Positions 30–47 (GRGDAGRDKHEFHNHEPL) are enriched in basic and acidic residues. The span at 154-165 (AEETEDADADEE) shows a compositional bias: acidic residues.

The protein belongs to the universal ribosomal protein uL15 family. In terms of assembly, part of the 50S ribosomal subunit. Interacts weakly with proteins L18e and L32e.

Its function is as follows. Binds to the 23S rRNA. The sequence is that of Large ribosomal subunit protein uL15 (rpl15) from Haloarcula marismortui (strain ATCC 43049 / DSM 3752 / JCM 8966 / VKM B-1809) (Halobacterium marismortui).